A 509-amino-acid chain; its full sequence is Pyruvate kinase (509 aa).

Residue Ser-29 is modified to Phosphoserine. Arg-56 contacts substrate. 2 residues coordinate K(+): Asn-58 and Ser-60. 58–61 (NFSH) serves as a coordination point for ATP. A Phosphoserine modification is found at Ser-63. Positions 91 and 92 each coordinate K(+). ATP is bound by residues Arg-98 and Lys-184. Residue Glu-249 coordinates Mg(2+). Gly-272 and Asp-273 together coordinate substrate. Asp-273 contacts Mg(2+). Position 281 is a phosphoserine (Ser-281). Residue Thr-305 participates in substrate binding. Residue Ser-412 is modified to Phosphoserine.

This sequence belongs to the pyruvate kinase family. Homotetramer. Requires Mg(2+) as cofactor. It depends on K(+) as a cofactor.

The enzyme catalyses pyruvate + ATP = phosphoenolpyruvate + ADP + H(+). It participates in carbohydrate degradation; glycolysis; pyruvate from D-glyceraldehyde 3-phosphate: step 5/5. The protein is Pyruvate kinase (pyk1) of Schizosaccharomyces pombe (strain 972 / ATCC 24843) (Fission yeast).